A 332-amino-acid chain; its full sequence is Glycerol-3-phosphate dehydrogenase [NAD(P)+] (332 aa).

Positions 14, 15, 35, and 107 each coordinate NADPH. Sn-glycerol 3-phosphate-binding residues include Lys-107, Gly-137, and Ser-139. NADPH is bound at residue Ala-141. Sn-glycerol 3-phosphate-binding residues include Lys-192, Asp-245, Ser-255, Arg-256, and Asn-257. Lys-192 functions as the Proton acceptor in the catalytic mechanism. NADPH is bound at residue Arg-256. Positions 280 and 282 each coordinate NADPH.

Belongs to the NAD-dependent glycerol-3-phosphate dehydrogenase family.

The protein localises to the cytoplasm. The catalysed reaction is sn-glycerol 3-phosphate + NAD(+) = dihydroxyacetone phosphate + NADH + H(+). It carries out the reaction sn-glycerol 3-phosphate + NADP(+) = dihydroxyacetone phosphate + NADPH + H(+). It functions in the pathway membrane lipid metabolism; glycerophospholipid metabolism. In terms of biological role, catalyzes the reduction of the glycolytic intermediate dihydroxyacetone phosphate (DHAP) to sn-glycerol 3-phosphate (G3P), the key precursor for phospholipid synthesis. The protein is Glycerol-3-phosphate dehydrogenase [NAD(P)+] of Desulfovibrio desulfuricans (strain ATCC 27774 / DSM 6949 / MB).